We begin with the raw amino-acid sequence, 92 residues long: Small ribosomal subunit protein uS19 (92 aa).

Belongs to the universal ribosomal protein uS19 family.

Protein S19 forms a complex with S13 that binds strongly to the 16S ribosomal RNA. The polypeptide is Small ribosomal subunit protein uS19 (Rippkaea orientalis (strain PCC 8801 / RF-1) (Cyanothece sp. (strain PCC 8801))).